The sequence spans 151 residues: Probable cGMP 3',5'-cyclic phosphodiesterase subunit delta (151 aa).

This sequence belongs to the PDE6D/unc-119 family. Interacts with Pde6.

The protein localises to the nucleus. It is found in the cytoplasm. The polypeptide is Probable cGMP 3',5'-cyclic phosphodiesterase subunit delta (Drosophila sechellia (Fruit fly)).